Reading from the N-terminus, the 190-residue chain is dTTP/UTP pyrophosphatase (190 aa).

The active-site Proton acceptor is aspartate 71.

The protein belongs to the Maf family. YhdE subfamily. The cofactor is a divalent metal cation.

The protein resides in the cytoplasm. It catalyses the reaction dTTP + H2O = dTMP + diphosphate + H(+). It carries out the reaction UTP + H2O = UMP + diphosphate + H(+). In terms of biological role, nucleoside triphosphate pyrophosphatase that hydrolyzes dTTP and UTP. May have a dual role in cell division arrest and in preventing the incorporation of modified nucleotides into cellular nucleic acids. The protein is dTTP/UTP pyrophosphatase of Xanthomonas oryzae pv. oryzae (strain MAFF 311018).